We begin with the raw amino-acid sequence, 284 residues long: uncharacterized protein (284 aa).

Positions 25–123 constitute an AB hydrolase-1 domain; that stretch reads PILVMHGGHS…NTLTLQSAVT (99 aa). Serine 96 is a catalytic residue.

The protein belongs to the AB hydrolase superfamily.

This is an uncharacterized protein from Bacillus subtilis (strain 168).